The following is a 793-amino-acid chain: Alanine--tRNA ligase, mitochondrial (793 aa).

ATP is bound by residues R88, W187, and 224-226; that span reads IWN. 2 residues coordinate L-alanine: N226 and D249. G253 provides a ligand contact to ATP. Positions 594, 598, 706, and 710 each coordinate Zn(2+).

This sequence belongs to the class-II aminoacyl-tRNA synthetase family. In terms of assembly, monomer. Zn(2+) is required as a cofactor.

The protein resides in the mitochondrion. It catalyses the reaction tRNA(Ala) + L-alanine + ATP = L-alanyl-tRNA(Ala) + AMP + diphosphate. Functionally, catalyzes the attachment of alanine to tRNA(Ala) in a two-step reaction: alanine is first activated by ATP to form Ala-AMP and then transferred to the acceptor end of tRNA(Ala). Also edits incorrectly charged tRNA(Ala) via its editing domain. In Caenorhabditis elegans, this protein is Alanine--tRNA ligase, mitochondrial.